The following is a 125-amino-acid chain: UPF0593 mitochondrial protein C806.05 (125 aa).

Belongs to the UPF0593 family.

The protein localises to the mitochondrion. The chain is UPF0593 mitochondrial protein C806.05 from Schizosaccharomyces pombe (strain 972 / ATCC 24843) (Fission yeast).